Consider the following 57-residue polypeptide: uncharacterized protein (57 aa).

The helical transmembrane segment at 34–54 (AALLDAAALVVIPGLLTAAAV) threads the bilayer.

It localises to the membrane. This is an uncharacterized protein from Dictyostelium discoideum (Social amoeba).